Consider the following 483-residue polypeptide: MSFQRLWAVRTQFLLLWLLLPAVPVPWAEARRSRVSLPCPDACDPTRCPTLPTCSAGLAPVPDRCGCCRVCAAAEGQECGGARGRPCAPRLRCGAPFSRDPSGGAWLGTCGCAEGAEDAVVCGSDGRTYPSLCALRKENRAARQRGALPAVPVQKGACEEAGTTRAGRLRRKYNFIAAVVEKVAPSVVHLQLFRRSPLTNQEIPSSSGSGFIVSEDGLIVTNAHVLTNQQKIQVELQSGARYEATVKDIDHKLDLALIKIEPDTELPVLLLGRSSDLRAGEFVVALGSPFSLQNTVTAGIVSTTQRGGRELGLKNSDIDYIQTDAIINHGNSGGPLVNLDGDVIGINTLKVTAGISFAIPSDRIRQFLEDYHERQLKGKAPLQKKYLGLRMLPLTLNLLQEMKRQDPEFPDVSSGVFVYEVIQGSAAASSGLRDHDVIVSINGQPVTTTTDVIEAVKDNDFLSIIVLRGSQTLFLTVTPEIIN.

A signal peptide spans 1 to 30 (MSFQRLWAVRTQFLLLWLLLPAVPVPWAEA). The IGFBP N-terminal domain maps to 35-113 (VSLPCPDACD…GAWLGTCGCA (79 aa)). Intrachain disulfides connect C39-C65, C43-C67, C48-C68, C54-C71, C79-C93, and C87-C110. A serine protease region spans residues 208–368 (GSGFIVSEDG…IPSDRIRQFL (161 aa)). Catalysis depends on charge relay system residues H224, D254, and S332. Residues 379–471 (KAPLQKKYLG…LSIIVLRGSQ (93 aa)) form the PDZ domain.

The protein belongs to the peptidase S1C family.

The protein resides in the secreted. In terms of biological role, serine protease. In Mus musculus (Mouse), this protein is Serine protease HTRA4 (Htra4).